The sequence spans 203 residues: Large ribosomal subunit protein bL25 (203 aa).

The protein belongs to the bacterial ribosomal protein bL25 family. CTC subfamily. Part of the 50S ribosomal subunit; part of the 5S rRNA/L5/L18/L25 subcomplex. Contacts the 5S rRNA. Binds to the 5S rRNA independently of L5 and L18.

In terms of biological role, this is one of the proteins that binds to the 5S RNA in the ribosome where it forms part of the central protuberance. This is Large ribosomal subunit protein bL25 from Paraburkholderia phymatum (strain DSM 17167 / CIP 108236 / LMG 21445 / STM815) (Burkholderia phymatum).